Consider the following 371-residue polypeptide: MRRALLLAALLACAPPAFADRLKDLTTVAGVRSNPLVGYGVVVGLSGTGDGNSQLTQQSMQSLISRLGLSVETGDLKAKNAAAVMVTADLPPFLKIGQTLDVTVSTVGQAKSLKGGTLLMTPLMGADGEVYAIAQGNLVVGGLGVEGKDGSSLTVNIPTVGRVPRGGMVEKMVETPFLETDHLVLNLNRGDFSTAAAVAEGVNRTFGPDVAVALDGTSIRVRAPADPARRVSFMSLLENVEVDPAPPVARVVVNARTGTVVIGGTVKVTPAAVTHGSLTVRVTEDQRVSQGASVVVGNNATVVAPGEPVVTPDSQVQVVEEPAKAFVFDPGVSLSSLVDAINAVGASPSDLVAILEALREAGALRAELVVI.

The first 19 residues, 1 to 19, serve as a signal peptide directing secretion; it reads MRRALLLAALLACAPPAFA.

Belongs to the FlgI family. In terms of assembly, the basal body constitutes a major portion of the flagellar organelle and consists of four rings (L,P,S, and M) mounted on a central rod.

It localises to the periplasm. Its subcellular location is the bacterial flagellum basal body. Assembles around the rod to form the L-ring and probably protects the motor/basal body from shearing forces during rotation. In Cereibacter sphaeroides (strain ATCC 17023 / DSM 158 / JCM 6121 / CCUG 31486 / LMG 2827 / NBRC 12203 / NCIMB 8253 / ATH 2.4.1.) (Rhodobacter sphaeroides), this protein is Flagellar P-ring protein 1.